The sequence spans 330 residues: Ribosomal RNA small subunit methyltransferase C (330 aa).

Belongs to the methyltransferase superfamily. RsmC family. In terms of assembly, monomer.

The protein localises to the cytoplasm. The catalysed reaction is guanosine(1207) in 16S rRNA + S-adenosyl-L-methionine = N(2)-methylguanosine(1207) in 16S rRNA + S-adenosyl-L-homocysteine + H(+). Specifically methylates the guanine in position 1207 of 16S rRNA in the 30S particle. In Haemophilus influenzae (strain PittEE), this protein is Ribosomal RNA small subunit methyltransferase C.